Reading from the N-terminus, the 360-residue chain is MIYWLADLLEPSYPFFRLFEYLTFRAIMSVLTALILSLWMGPRLIARLQMLQIGQVVRNDGPESHFSKRGTPTMGGIMILAAITITALLWTDLSNPYIWAVLAVMLGYGVVGFVDDYRKVVHKNSDGLIARWKYFWQSVIALVIAFALYMHGKDTAATQLVVPFFKDVMPQLGLLYIVLTYFVIVGTSNAVNLTDGLDGLAIMPTVMVAGGMAFIAWATGNVNFAEYLHIPYLKDTSELVVLCTAIVGAGLGFLWFNTYPAQVFMGDVGSLALGGALGTIAVLVRQELLLVIMGGVFVMETVSVILQVGSYKLRGQRIFRMAPIHHHYELKGWPEPRVIVRFWIITLMLVLIALATLKVR.

The next 10 membrane-spanning stretches (helical) occupy residues 26 to 46 (AIMS…RLIA), 70 to 90 (GTPT…ALLW), 94 to 114 (SNPY…VGFV), 132 to 152 (WKYF…YMHG), 168 to 188 (VMPQ…VGTS), 199 to 219 (GLAI…AWAT), 239 to 259 (LVVL…FNTY), 263 to 283 (VFMG…IAVL), 288 to 308 (LLLV…ILQV), and 338 to 358 (VIVR…ATLK).

The protein belongs to the glycosyltransferase 4 family. MraY subfamily. It depends on Mg(2+) as a cofactor.

Its subcellular location is the cell inner membrane. The enzyme catalyses UDP-N-acetyl-alpha-D-muramoyl-L-alanyl-gamma-D-glutamyl-meso-2,6-diaminopimeloyl-D-alanyl-D-alanine + di-trans,octa-cis-undecaprenyl phosphate = di-trans,octa-cis-undecaprenyl diphospho-N-acetyl-alpha-D-muramoyl-L-alanyl-D-glutamyl-meso-2,6-diaminopimeloyl-D-alanyl-D-alanine + UMP. It participates in cell wall biogenesis; peptidoglycan biosynthesis. Functionally, catalyzes the initial step of the lipid cycle reactions in the biosynthesis of the cell wall peptidoglycan: transfers peptidoglycan precursor phospho-MurNAc-pentapeptide from UDP-MurNAc-pentapeptide onto the lipid carrier undecaprenyl phosphate, yielding undecaprenyl-pyrophosphoryl-MurNAc-pentapeptide, known as lipid I. In Photobacterium profundum (strain SS9), this protein is Phospho-N-acetylmuramoyl-pentapeptide-transferase.